We begin with the raw amino-acid sequence, 1550 residues long: Cellulose synthase 1 (1550 aa).

Residues 1–741 (MPEVRSSTQS…KERVLKGTVK (741 aa)) form a catalytic region. The next 3 membrane-spanning stretches (helical) occupy residues 26-46 (GAGL…TSVT), 47-67 (LPPE…FIVG), and 106-126 (GLLG…LFLS). The tract at residues 147-240 (EWPTVDIFVP…YILIFDCDHV (94 aa)) is catalytic subdomain A. Asp189 is a catalytic residue. Substrate contacts are provided by Asp236 and Asp238. The interval 317-377 (TAIEQIGGFA…GQRVRWARGM (61 aa)) is catalytic subdomain B. The active site involves Asp333. Helical transmembrane passes span 398–418 (LCYL…IFLS), 423–443 (FLFF…AYAI), 468–488 (VYET…LLSP), 507–527 (FDLG…GGLA), and 547–567 (LLNS…IAVG). The 76-residue stretch at 572-647 (QKRNSHRIPA…PARIIRAGNG (76 aa)) folds into the PilZ domain. Disordered stretches follow at residues 708-731 (VHRS…NPSR) and 768-813 (APAH…QPLA). The tract at residues 742-1550 (MVSLLALLTF…KQLEDERRKS (809 aa)) is cyclic di-GMP binding domain. Residues 768–796 (APAHQPEASDLPPLPALLPATSGAAQAGS) are compositionally biased toward low complexity. The helical transmembrane segment at 1513–1533 (VLLVGLLGCILIVSVLARALA) threads the bilayer.

This sequence in the N-terminal section; belongs to the glycosyltransferase 2 family. In the C-terminal section; belongs to the AcsB/BcsB family. The cofactor is Mg(2+).

The protein resides in the cell inner membrane. The catalysed reaction is [(1-&gt;4)-beta-D-glucosyl](n) + UDP-alpha-D-glucose = [(1-&gt;4)-beta-D-glucosyl](n+1) + UDP + H(+). The protein operates within glycan metabolism; bacterial cellulose biosynthesis. Bifunctional protein comprised of a catalytic subunit and a regulatory subunit. The catalytic subunit of cellulose synthase polymerizes uridine 5'-diphosphate glucose to cellulose in a processive way. The thick cellulosic mats generated by this enzyme probably provide a specialized protective environment to the bacterium. The regulatory subunit binds bis-(3'-5') cyclic diguanylic acid (c-di-GMP). This chain is Cellulose synthase 1 (acsAB), found in Novacetimonas hansenii (Komagataeibacter hansenii).